Consider the following 240-residue polypeptide: Small ribosomal subunit protein eS4 (240 aa).

Residues 37–99 (VPLVVLLRDV…RGEFFRVFPD (63 aa)) form the S4 RNA-binding domain.

Belongs to the eukaryotic ribosomal protein eS4 family.

In Halorubrum lacusprofundi (strain ATCC 49239 / DSM 5036 / JCM 8891 / ACAM 34), this protein is Small ribosomal subunit protein eS4.